Consider the following 143-residue polypeptide: Hemoglobin subunit alpha (143 aa).

Residue Ser-2 is modified to N-acetylserine. The 142-residue stretch at 2 to 143 folds into the Globin domain; the sequence is SLSDTDKAVV…LALALSEKYR (142 aa). His-60 contributes to the O2 binding site. His-89 contributes to the heme b binding site.

It belongs to the globin family. As to quaternary structure, heterotetramer of two alpha chains and two beta chains. In terms of tissue distribution, red blood cells.

Its function is as follows. Involved in oxygen transport from gills to the various peripheral tissues. The polypeptide is Hemoglobin subunit alpha (hbaa1) (Danio rerio (Zebrafish)).